Consider the following 205-residue polypeptide: Metalloproteinase inhibitor 1 (205 aa).

An N-terminal signal peptide occupies residues 1-24 (MMAPFASLASGILLLLSLIASSKA). A Zn(2+)-binding site is contributed by Cys25. Positions 25 to 28 (CSCA) are involved in metalloproteinase-binding. Cystine bridges form between Cys25/Cys94, Cys27/Cys123, Cys37/Cys148, Cys151/Cys197, Cys156/Cys161, and Cys169/Cys189. One can recognise an NTR domain in the interval 25–148 (CSCAPPHPQT…AFSKTYSAGC (124 aa)). Asn54 carries an N-linked (GlcNAc...) asparagine glycan. The involved in metalloproteinase-binding stretch occupies residues 91–92 (ES). N-linked (GlcNAc...) asparagine glycosylation is present at Asn102. A Phosphoserine modification is found at Ser179.

The protein belongs to the protease inhibitor I35 (TIMP) family. Interacts with MMP1, MMP3, MMP10 and MMP13, but has only very low affinity for MMP14. Interacts with CD63; identified in a complex with CD63 and ITGB1. The activity of TIMP1 is dependent on the presence of disulfide bonds. In terms of processing, N-glycosylated. As to expression, found in fetal and adult tissues. Highest levels are found in bone. Also found in lung, ovary and uterus.

It is found in the secreted. Functionally, metalloproteinase inhibitor that functions by forming one to one complexes with target metalloproteinases, such as collagenases, and irreversibly inactivates them by binding to their catalytic zinc cofactor. Acts on MMP1, MMP2, MMP3, MMP7, MMP8, MMP9, MMP10, MMP11, MMP12, MMP13 and MMP16. Does not act on MMP14. Also functions as a growth factor that regulates cell differentiation, migration and cell death and activates cellular signaling cascades via CD63 and ITGB1. Plays a role in integrin signaling. This is Metalloproteinase inhibitor 1 (Timp1) from Mus musculus (Mouse).